The primary structure comprises 394 residues: 8-amino-7-oxononanoate synthase (394 aa).

R21 provides a ligand contact to substrate. 112-113 (GY) lines the pyridoxal 5'-phosphate pocket. A substrate-binding site is contributed by H137. Residues S183, H211, and T239 each coordinate pyridoxal 5'-phosphate. K242 carries the N6-(pyridoxal phosphate)lysine modification. A substrate-binding site is contributed by T358.

Belongs to the class-II pyridoxal-phosphate-dependent aminotransferase family. BioF subfamily. In terms of assembly, homodimer. Pyridoxal 5'-phosphate is required as a cofactor.

The catalysed reaction is 6-carboxyhexanoyl-[ACP] + L-alanine + H(+) = (8S)-8-amino-7-oxononanoate + holo-[ACP] + CO2. Its pathway is cofactor biosynthesis; biotin biosynthesis. In terms of biological role, catalyzes the decarboxylative condensation of pimeloyl-[acyl-carrier protein] and L-alanine to produce 8-amino-7-oxononanoate (AON), [acyl-carrier protein], and carbon dioxide. The polypeptide is 8-amino-7-oxononanoate synthase (Paraburkholderia xenovorans (strain LB400)).